The chain runs to 419 residues: UDP-N-acetylglucosamine 1-carboxyvinyltransferase (419 aa).

Phosphoenolpyruvate is bound at residue 22 to 23 (KN). Arginine 91 is a binding site for UDP-N-acetyl-alpha-D-glucosamine. Cysteine 115 acts as the Proton donor in catalysis. Position 115 is a 2-(S-cysteinyl)pyruvic acid O-phosphothioketal (cysteine 115). UDP-N-acetyl-alpha-D-glucosamine is bound by residues 120 to 124 (RPVDL), 160 to 163 (KVSV), aspartate 305, and valine 327.

The protein belongs to the EPSP synthase family. MurA subfamily.

It is found in the cytoplasm. The enzyme catalyses phosphoenolpyruvate + UDP-N-acetyl-alpha-D-glucosamine = UDP-N-acetyl-3-O-(1-carboxyvinyl)-alpha-D-glucosamine + phosphate. The protein operates within cell wall biogenesis; peptidoglycan biosynthesis. Functionally, cell wall formation. Adds enolpyruvyl to UDP-N-acetylglucosamine. This is UDP-N-acetylglucosamine 1-carboxyvinyltransferase from Salmonella schwarzengrund (strain CVM19633).